A 500-amino-acid polypeptide reads, in one-letter code: Cytochrome P450 726A27 (500 aa).

A helical; Signal-anchor for type II membrane protein membrane pass occupies residues 7–27 (IPSYPIIFSFFIFIFMLIKIW). Heme is bound at residue Cys440.

Belongs to the cytochrome P450 family. Heme serves as cofactor. As to expression, expressed in mature seeds.

It localises to the membrane. The catalysed reaction is (-)-casbene + reduced [NADPH--hemoprotein reductase] + O2 = 4-hydroxycasbene + oxidized [NADPH--hemoprotein reductase] + H2O + H(+). It catalyses the reaction 8-hydroxycasbene + reduced [NADPH--hemoprotein reductase] + O2 = 4,8-dihydroxycasbene + oxidized [NADPH--hemoprotein reductase] + H2O + H(+). It carries out the reaction 4,8-dihydroxycasbene + reduced [NADPH--hemoprotein reductase] + O2 = 4,5,8-trihydroxycasbene + oxidized [NADPH--hemoprotein reductase] + H2O + H(+). It participates in secondary metabolite biosynthesis; terpenoid biosynthesis. Functionally, involved in the biosynthesis of macrocyclic lathyrane type diterpenoids (also called Euphorbia factors) natural products, including the cyclization route from casbene to jolkinol C, a precursor for ingenol mebutate that is used to treat actinic keratosis, a precancerous skin condition. Catalyzes the hydroxylation of (-)-casbene and 8-hydroxycasbene to produce 4-hydroxycasbene and 4,8-dihydroxycasbene, respectively. The protein is Cytochrome P450 726A27 of Euphorbia lathyris (Caper spurge).